Here is a 682-residue protein sequence, read N- to C-terminus: Potassium-transporting ATPase ATP-binding subunit (682 aa).

4 helical membrane-spanning segments follow: residues 34 to 54 (PVMF…IAMA), 62 to 82 (ALFS…ANFA), 219 to 239 (IALT…TATL), and 254 to 274 (VLVA…LSAI). The active-site 4-aspartylphosphate intermediate is Asp307. Residues Asp344, Glu348, 377–384 (FTAQSRMS), and Lys395 contribute to the ATP site. Mg(2+)-binding residues include Asp518 and Asp522. 3 helical membrane passes run 588–608 (FAII…LNIM), 616–636 (AILS…PLAL), and 656–676 (IYGL…DLLL).

It belongs to the cation transport ATPase (P-type) (TC 3.A.3) family. Type IA subfamily. As to quaternary structure, the system is composed of three essential subunits: KdpA, KdpB and KdpC.

It localises to the cell inner membrane. The enzyme catalyses K(+)(out) + ATP + H2O = K(+)(in) + ADP + phosphate + H(+). In terms of biological role, part of the high-affinity ATP-driven potassium transport (or Kdp) system, which catalyzes the hydrolysis of ATP coupled with the electrogenic transport of potassium into the cytoplasm. This subunit is responsible for energy coupling to the transport system and for the release of the potassium ions to the cytoplasm. The chain is Potassium-transporting ATPase ATP-binding subunit from Escherichia coli (strain SMS-3-5 / SECEC).